A 491-amino-acid chain; its full sequence is MTTSEVRVRFCPSPTGTPHVGLVRTALFNWAFARHNGGSFVFRIEDTDAARDSEESYQAILDALRWLGLNWDEGPEVGGPYEPYRQSQRRDLHLDVVAKLLAAGEAYESFSTPEEVEERHKAAGRDPKLGYDNFDRDLTPDQRQAFLDEGRKPVVRLRMPDHDLTWDDLVRGETTFKAGTVPDFALTRGNGIPLYTLVNPVDDALMKITHVLRGEDLLSSTPRQLALYEAMQRIGVADFTPRFGHLPFVMGQGNKKLSKRDPESNLFIHRDRGFVPEGLLNYLALLGWGISDDHDVFSLDEMVAAFDISKVNSNPARFDQKKADAINAEHIRLLEPADFAARLRAFLTLHGHLGETVDESVFATAAELVQTRIVVLSDAWDLLKFLFVDEADFAIDPAAAAKNLGADSAPVLDAALASLDAVEAWDAASLEEALKTALVDELGLKPRKAFAPVRVAVTGSHISPPLYESMELLGRDVSLSRLRSARAGVAG.

The 'HIGH' region signature appears at 12 to 22 (PSPTGTPHVGL). Residues 111-134 (STPEEVEERHKAAGRDPKLGYDNF) are disordered. Residues 117-134 (EERHKAAGRDPKLGYDNF) are compositionally biased toward basic and acidic residues. A 'KMSKS' region motif is present at residues 256-260 (KLSKR). Position 259 (K259) interacts with ATP.

This sequence belongs to the class-I aminoacyl-tRNA synthetase family. Glutamate--tRNA ligase type 1 subfamily. Monomer.

It is found in the cytoplasm. It catalyses the reaction tRNA(Glu) + L-glutamate + ATP = L-glutamyl-tRNA(Glu) + AMP + diphosphate. Its function is as follows. Catalyzes the attachment of glutamate to tRNA(Glu) in a two-step reaction: glutamate is first activated by ATP to form Glu-AMP and then transferred to the acceptor end of tRNA(Glu). This chain is Glutamate--tRNA ligase, found in Rhodococcus jostii (strain RHA1).